We begin with the raw amino-acid sequence, 311 residues long: MHCPDKESVYHIPVMLGECLEGLRIDPDGCYVDVTFGGGGHSRAIVEKLSSKGRLYGFDQDADACRNILQDERFTFVTSNFRYLANFMDYYGEDGVDGILADLGVSSHHFDEEERGFSFRSESPLLDMRMNARAGRNAAAILNEYDASSLSALFYHYGELKQARRFAASIVHYRESLSGGLQTVGQLLEAVRGLISPREEKKQLACIFQALRIEVNDELGALQQMLEAALGCLRSGGRLVVMTYHSLEDRMVKNVLRYGTVKAPDEDSLRLYGAPQSPWQQITRKPLTASTKELSDNPRSRSAKLRIAEKI.

S-adenosyl-L-methionine is bound by residues 39-41 (GGH), Asp59, Phe81, Asp102, and His109.

Belongs to the methyltransferase superfamily. RsmH family.

Its subcellular location is the cytoplasm. The enzyme catalyses cytidine(1402) in 16S rRNA + S-adenosyl-L-methionine = N(4)-methylcytidine(1402) in 16S rRNA + S-adenosyl-L-homocysteine + H(+). In terms of biological role, specifically methylates the N4 position of cytidine in position 1402 (C1402) of 16S rRNA. In Porphyromonas gingivalis (strain ATCC BAA-308 / W83), this protein is Ribosomal RNA small subunit methyltransferase H.